A 92-amino-acid polypeptide reads, in one-letter code: CRISPR-associated endoribonuclease Cas2 1 (92 aa).

Residue Asp10 participates in Mg(2+) binding.

It belongs to the CRISPR-associated endoribonuclease Cas2 protein family. As to quaternary structure, homodimer, forms a heterotetramer with a Cas1 homodimer. Mg(2+) is required as a cofactor.

Its function is as follows. CRISPR (clustered regularly interspaced short palindromic repeat), is an adaptive immune system that provides protection against mobile genetic elements (viruses, transposable elements and conjugative plasmids). CRISPR clusters contain sequences complementary to antecedent mobile elements and target invading nucleic acids. CRISPR clusters are transcribed and processed into CRISPR RNA (crRNA). Functions as a ssRNA-specific endoribonuclease. Involved in the integration of spacer DNA into the CRISPR cassette. The sequence is that of CRISPR-associated endoribonuclease Cas2 1 from Thermodesulfovibrio yellowstonii (strain ATCC 51303 / DSM 11347 / YP87).